A 421-amino-acid polypeptide reads, in one-letter code: MASSSVPPATVSAATAGPGPGFGFASKTKKKHFVQQKVKVFRAADPLVGVFLWGVAHSINELSQVPPPVMLLPDDFKASSKIKVNNHLFHRENLPSHFKFKEYCPQVFRNLRDRFGIDDQDYLVSLTRNPPSESEGSDGRFLISYDRTLVIKEVSSEDIADMHSNLSNYHQYIVKCHGNTLLPQFLGMYRVSVDNEDSYMLVMRNMFSHRLPVHRKYDLKGSLVSREASDKEKVKELPTLKDMDFLNKNQKVYIGEEEKKIFLEKLKRDVEFLVQLKIMDYSLLLGIHDIIRGSEPEEEAPVREDESEVDGDCSLTGPPALVGSYGTSPEGIGGYIHSHRPLGPGEFESFIDVYAIRSAEGAPQKEVYFMGLIDILTQYDAKKKAAHAAKTVKHGAGAEISTVHPEQYAKRFLDFITNIFA.

Alanine 2 is modified (N-acetylalanine). Serine 26 is modified (phosphoserine). The PIPK domain maps to 43–420; the sequence is AADPLVGVFL…RFLDFITNIF (378 aa). Residues 69–75 form a required for interaction with PIP5K1A region; it reads VMLLPDD. The residue at position 349 (serine 349) is a Phosphoserine.

As to quaternary structure, interacts with PIP5K1A; the interaction inhibits PIP5K1A kinase activity. Post-translationally, phosphorylated, phosphorylation is induced by EGF.

Its subcellular location is the endoplasmic reticulum. The protein resides in the cytoplasm. It carries out the reaction a 1,2-diacyl-sn-glycero-3-phospho-(1D-myo-inositol-5-phosphate) + ATP = a 1,2-diacyl-sn-glycero-3-phospho-(1D-myo-inositol-4,5-bisphosphate) + ADP + H(+). The enzyme catalyses 1,2-dihexadecanoyl-sn-glycero-3-phospho-(1D-myo-inositol-5-phosphate) + ATP = 1,2-dihexadecanoyl-sn-glycero-3-phospho-(1D-myo-inositol-4,5-bisphosphate) + ADP + H(+). The catalysed reaction is 1,2-dihexadecanoyl-sn-glycero-3-phospho-(1D-myo-inositol-5-phosphate) + GTP = 1,2-dihexadecanoyl-sn-glycero-3-phospho-(1D-myo-inositol-4,5-bisphosphate) + GDP + H(+). Phosphatidylinositol 5-phosphate 4-kinase with low enzymatic activity. May be a GTP sensor, has higher GTP-dependent kinase activity than ATP-dependent kinase activity. PIP4Ks negatively regulate insulin signaling through a catalytic-independent mechanism. They interact with PIP5Ks and suppress PIP5K-mediated PtdIns(4,5)P2 synthesis and insulin-dependent conversion to PtdIns(3,4,5)P3. The sequence is that of Phosphatidylinositol 5-phosphate 4-kinase type-2 gamma from Homo sapiens (Human).